Reading from the N-terminus, the 292-residue chain is NAD kinase (292 aa).

The Proton acceptor role is filled by Asp72. Residues 72-73 (DG), 146-147 (NE), His157, Arg174, Asp176, and 187-192 (TAYSLS) each bind NAD(+).

This sequence belongs to the NAD kinase family. A divalent metal cation is required as a cofactor.

The protein resides in the cytoplasm. The catalysed reaction is NAD(+) + ATP = ADP + NADP(+) + H(+). In terms of biological role, involved in the regulation of the intracellular balance of NAD and NADP, and is a key enzyme in the biosynthesis of NADP. Catalyzes specifically the phosphorylation on 2'-hydroxyl of the adenosine moiety of NAD to yield NADP. The sequence is that of NAD kinase from Shewanella woodyi (strain ATCC 51908 / MS32).